A 190-amino-acid polypeptide reads, in one-letter code: Cytoplasmic envelopment protein 3 (190 aa).

Gly2 carries N-myristoyl glycine; by host lipidation. Positions 14–190 are disordered; it reads GTTSGEPLKD…TKKPAASLPF (177 aa). Residues 30 to 43 are compositionally biased toward polar residues; it reads SLRSYDNIPPTSSS. Acidic residues predominate over residues 44–58; that stretch reads DEGEDDDDGEDDDNE. Over residues 80-90 the composition is skewed to basic and acidic residues; the sequence is SHREATHDGPK. The segment covering 108 to 123 has biased composition (basic residues); it reads KQSKKKKKPSKHHHHQ. Residues 130–139 show a composition bias toward acidic residues; it reads ETDDLDEEDT.

This sequence belongs to the herpesviridae cytoplasmic envelopment protein 3 family. In terms of assembly, interacts with cytoplasmic envelopment protein 2; this interaction is essential for the proper localization of each protein to the assembly complex and thus for the production of infectious virus. Myristoylation and palmitoylation (probably on one or more of the nearby cysteines at the N-terminus) enable membrane-binding and Golgi apparatus-specific targeting and are essential for efficient packaging. Post-translationally, phosphorylated. Phosphorylation does not seem to be required for recycling to the host Golgi apparatus. Packaging is selective for underphosphorylated forms.

The protein localises to the virion tegument. It localises to the virion membrane. It is found in the host cell membrane. The protein resides in the host Golgi apparatus membrane. Functionally, plays an important role in the cytoplasmic envelopment of tegument proteins and capsids during the assembly and egress processes. Also participates in viral entry at the fusion step probably by regulating the core fusion machinery. This is Cytoplasmic envelopment protein 3 (UL99) from Human cytomegalovirus (strain Merlin) (HHV-5).